The sequence spans 171 residues: Shikimate kinase (171 aa).

14-19 (GAGKST) contacts ATP. A Mg(2+)-binding site is contributed by serine 18. Aspartate 36, arginine 60, and glycine 82 together coordinate substrate. Arginine 120 contacts ATP. Arginine 139 contributes to the substrate binding site. Glutamine 156 serves as a coordination point for ATP.

This sequence belongs to the shikimate kinase family. As to quaternary structure, monomer. The cofactor is Mg(2+).

It localises to the cytoplasm. It catalyses the reaction shikimate + ATP = 3-phosphoshikimate + ADP + H(+). It participates in metabolic intermediate biosynthesis; chorismate biosynthesis; chorismate from D-erythrose 4-phosphate and phosphoenolpyruvate: step 5/7. Its function is as follows. Catalyzes the specific phosphorylation of the 3-hydroxyl group of shikimic acid using ATP as a cosubstrate. The polypeptide is Shikimate kinase (Shewanella putrefaciens (strain CN-32 / ATCC BAA-453)).